We begin with the raw amino-acid sequence, 229 residues long: Large ribosomal subunit protein uL1 (229 aa).

Belongs to the universal ribosomal protein uL1 family. In terms of assembly, part of the 50S ribosomal subunit.

In terms of biological role, binds directly to 23S rRNA. The L1 stalk is quite mobile in the ribosome, and is involved in E site tRNA release. Protein L1 is also a translational repressor protein, it controls the translation of the L11 operon by binding to its mRNA. The protein is Large ribosomal subunit protein uL1 of Caulobacter vibrioides (strain ATCC 19089 / CIP 103742 / CB 15) (Caulobacter crescentus).